The primary structure comprises 627 residues: ATP-dependent zinc metalloprotease FtsH 2 (627 aa).

Residues 1–7 lie on the Cytoplasmic side of the membrane; the sequence is MKFSWRT. A helical membrane pass occupies residues 8-28; it reads ALLWSLPLLVVGFFFWQGSFG. Residues 29 to 117 are Lumenal-facing; it reads GADANLGSNT…SHPVRNNGMV (89 aa). A helical transmembrane segment spans residues 118–138; the sequence is WGFVGNLIFPVLLIASLFFLF. Residues 139 to 627 are Cytoplasmic-facing; it reads RRSSNMPGGP…PVKEQLIPQL (489 aa). 212 to 219 contributes to the ATP binding site; that stretch reads GPPGTGKT. Histidine 433 provides a ligand contact to Zn(2+). Glutamate 434 is a catalytic residue. Zn(2+)-binding residues include histidine 437 and aspartate 511.

In the central section; belongs to the AAA ATPase family. The protein in the C-terminal section; belongs to the peptidase M41 family. In terms of assembly, homohexamer (Potential). Part of a large (&gt;500 kDa) complex that includes FtsH3 and PSII. Coimmunoprecipitates with YidC. Zn(2+) is required as a cofactor.

It localises to the cellular thylakoid membrane. Functionally, acts as a processive, ATP-dependent zinc metallopeptidase for both cytoplasmic and membrane proteins. Plays a role in the quality control of integral membrane proteins. Plays a role in the selective replacement of photosystem II (PSII) protein D1 in the PSII repair cycle following visible-light and UV-B induced damage. If damaged D1 is not removed then new D1 cannot be inserted to restore the PSII reaction center. Seems to also degrade damaged and/or unassembled PSII proteins D2 and PsbB (CP47). May recognize D1 via its first 20 amino acids, as deletion of these prevents the PSII repair cycle. Also seems to degrade cytoplasmic GGPS, glucosylglycerol-phosphate synthase. The sequence is that of ATP-dependent zinc metalloprotease FtsH 2 (ftsH2) from Synechocystis sp. (strain ATCC 27184 / PCC 6803 / Kazusa).